The sequence spans 239 residues: Ribonuclease PH (239 aa).

Phosphate-binding positions include Arg-87 and Gly-125–Arg-127.

Belongs to the RNase PH family. Homohexameric ring arranged as a trimer of dimers.

The catalysed reaction is tRNA(n+1) + phosphate = tRNA(n) + a ribonucleoside 5'-diphosphate. Its function is as follows. Phosphorolytic 3'-5' exoribonuclease that plays an important role in tRNA 3'-end maturation. Removes nucleotide residues following the 3'-CCA terminus of tRNAs; can also add nucleotides to the ends of RNA molecules by using nucleoside diphosphates as substrates, but this may not be physiologically important. Probably plays a role in initiation of 16S rRNA degradation (leading to ribosome degradation) during starvation. This is Ribonuclease PH from Syntrophomonas wolfei subsp. wolfei (strain DSM 2245B / Goettingen).